Consider the following 370-residue polypeptide: sn-glycerol-3-phosphate import ATP-binding protein UgpC (370 aa).

In terms of domain architecture, ABC transporter spans 4-236; the sequence is LSLKNIAKRY…PATAFVAAFM (233 aa). 38 to 45 is a binding site for ATP; that stretch reads GPSGCGKS.

Belongs to the ABC transporter superfamily. sn-glycerol-3-phosphate importer (TC 3.A.1.1.3) family. As to quaternary structure, the complex is composed of two ATP-binding proteins (UgpC), two transmembrane proteins (UgpA and UgpE) and a solute-binding protein (UgpB).

It is found in the cell inner membrane. It catalyses the reaction sn-glycerol 3-phosphate(out) + ATP + H2O = sn-glycerol 3-phosphate(in) + ADP + phosphate + H(+). Part of the ABC transporter complex UgpBAEC involved in sn-glycerol-3-phosphate (G3P) import. Responsible for energy coupling to the transport system. The sequence is that of sn-glycerol-3-phosphate import ATP-binding protein UgpC from Chromobacterium violaceum (strain ATCC 12472 / DSM 30191 / JCM 1249 / CCUG 213 / NBRC 12614 / NCIMB 9131 / NCTC 9757 / MK).